The chain runs to 78 residues: Antimicrobial peptide marcin-18 (78 aa).

The first 23 residues, 1-23 (MQFKKQLMVIFLAYFLVVNESEA), serve as a signal peptide directing secretion. The residue at position 41 (Arg-41) is an Arginine amide. Positions 42–78 (RKNQRSRSIMKRDLENLFDPYQRNLELDRLLKQLPNY) are excised as a propeptide.

Belongs to the non-disulfide-bridged peptide (NDBP) superfamily. Medium-length antimicrobial peptide (group 3) family. Expressed by the venom gland.

The protein resides in the secreted. It is found in the target cell membrane. Antimicrobial peptide with potent activity against bacteria. Acts by fastly disrupting the bacterial membrane. Shows activity against Gram-positive bacteria S.aureus (MIC=1.5-2.9 uM) and S.epidermidis (MIC=2.9 uM), M.luteus (MIC=23.4 uM), B.thuringiensis (MIC=2.9 uM), B.subtilis (MIC=2.9 uM) and Gram-negative bacteria E.coli (MIC=5.9-11.7 uM) and P.aeruginosa (MIC=5.9 uM), as well as against penicillin (MIC=2.9 uM) and methicillin (MIC=1.5-2.9 uM) resistant bacteria. Antibiotic activity is not affected by major negatively charged components of the prokaryotic cell wall (e.g. lipopolysaccharides and lipoteichoic acid). In vivo, in a mouse model of lethal peritonitis, shows potent antibiotic activity without cytotoxicity, improving the survival rate. The protein is Antimicrobial peptide marcin-18 of Olivierus martensii (Manchurian scorpion).